The chain runs to 340 residues: Uroporphyrinogen decarboxylase (340 aa).

Residues 21–25 (RQAGR), D71, Y148, S203, and H316 each bind substrate.

The protein belongs to the uroporphyrinogen decarboxylase family. In terms of assembly, homodimer.

The protein localises to the cytoplasm. The catalysed reaction is uroporphyrinogen III + 4 H(+) = coproporphyrinogen III + 4 CO2. The protein operates within porphyrin-containing compound metabolism; protoporphyrin-IX biosynthesis; coproporphyrinogen-III from 5-aminolevulinate: step 4/4. Catalyzes the decarboxylation of four acetate groups of uroporphyrinogen-III to yield coproporphyrinogen-III. The protein is Uroporphyrinogen decarboxylase of Campylobacter hominis (strain ATCC BAA-381 / DSM 21671 / CCUG 45161 / LMG 19568 / NCTC 13146 / CH001A).